Reading from the N-terminus, the 484-residue chain is Protein DETOXIFICATION 33 (484 aa).

A compositionally biased stretch (basic and acidic residues) spans methionine 1 to proline 16. A disordered region spans residues methionine 1–lysine 22. 12 helical membrane passes run leucine 39 to leucine 59, valine 81 to cysteine 101, valine 122 to leucine 142, alanine 155 to isoleucine 175, tryptophan 190 to phenylalanine 210, alanine 218 to isoleucine 238, alanine 267 to leucine 287, valine 294 to phenylalanine 314, valine 338 to alanine 358, isoleucine 380 to valine 400, leucine 409 to leucine 429, and glycine 439 to isoleucine 459.

Belongs to the multi antimicrobial extrusion (MATE) (TC 2.A.66.1) family.

Its subcellular location is the membrane. The sequence is that of Protein DETOXIFICATION 33 from Arabidopsis thaliana (Mouse-ear cress).